Consider the following 194-residue polypeptide: Crossover junction endodeoxyribonuclease RuvC (194 aa).

Residues D7, E68, and D141 contribute to the active site. 3 residues coordinate Mg(2+): D7, E68, and D141.

Belongs to the RuvC family. In terms of assembly, homodimer which binds Holliday junction (HJ) DNA. The HJ becomes 2-fold symmetrical on binding to RuvC with unstacked arms; it has a different conformation from HJ DNA in complex with RuvA. In the full resolvosome a probable DNA-RuvA(4)-RuvB(12)-RuvC(2) complex forms which resolves the HJ. Mg(2+) is required as a cofactor.

The protein localises to the cytoplasm. It catalyses the reaction Endonucleolytic cleavage at a junction such as a reciprocal single-stranded crossover between two homologous DNA duplexes (Holliday junction).. In terms of biological role, the RuvA-RuvB-RuvC complex processes Holliday junction (HJ) DNA during genetic recombination and DNA repair. Endonuclease that resolves HJ intermediates. Cleaves cruciform DNA by making single-stranded nicks across the HJ at symmetrical positions within the homologous arms, yielding a 5'-phosphate and a 3'-hydroxyl group; requires a central core of homology in the junction. The consensus cleavage sequence is 5'-(A/T)TT(C/G)-3'. Cleavage occurs on the 3'-side of the TT dinucleotide at the point of strand exchange. HJ branch migration catalyzed by RuvA-RuvB allows RuvC to scan DNA until it finds its consensus sequence, where it cleaves and resolves the cruciform DNA. In Mycolicibacterium vanbaalenii (strain DSM 7251 / JCM 13017 / BCRC 16820 / KCTC 9966 / NRRL B-24157 / PYR-1) (Mycobacterium vanbaalenii), this protein is Crossover junction endodeoxyribonuclease RuvC.